Consider the following 129-residue polypeptide: Succinate dehydrogenase subunit 3-1, mitochondrial (129 aa).

Residues 1 to 58 constitute a mitochondrion transit peptide; sequence MEKYHSNSRFAPFRDAPFALRGALGSSGSSFSSIDSLRRSSTLEQARGYTSRPLGAVR. A compositionally biased stretch (low complexity) spans 25–35; that stretch reads GSSGSSFSSID. The interval 25 to 80 is disordered; sequence GSSGSSFSSIDSLRRSSTLEQARGYTSRPLGAVRPKMLPSGCRPLHTSHPLSAPVA. His87 serves as a coordination point for heme. Residues 105 to 127 form a helical membrane-spanning segment; it reads IFGAALGAAIISIPLATKFSLMF.

In terms of assembly, component of complex II composed of eight subunits in plants: four classical SDH subunits SDH1, SDH2, SDH3 and SDH4 (a flavoprotein (FP), an iron-sulfur protein (IP), and a cytochrome b composed of a large and a small subunit.), as well as four subunits unknown in mitochondria from bacteria and heterotrophic eukaryotes. Heme is required as a cofactor.

The protein localises to the mitochondrion inner membrane. Its pathway is carbohydrate metabolism; tricarboxylic acid cycle. In terms of biological role, membrane-anchoring subunit of succinate dehydrogenase (SDH). The chain is Succinate dehydrogenase subunit 3-1, mitochondrial from Oryza sativa subsp. japonica (Rice).